Here is a 243-residue protein sequence, read N- to C-terminus: Small ribosomal subunit protein mS23 (243 aa).

Belongs to the mitochondrion-specific ribosomal protein mS23 family. As to quaternary structure, component of the mitochondrial small ribosomal subunit.

The protein localises to the mitochondrion. This chain is Small ribosomal subunit protein mS23 (rsm25), found in Emericella nidulans (strain FGSC A4 / ATCC 38163 / CBS 112.46 / NRRL 194 / M139) (Aspergillus nidulans).